A 263-amino-acid polypeptide reads, in one-letter code: Thymidylate kinase (263 aa).

Residues 1-51 (MKRICSVSSVQLFSRSFRALASPRSLNYPLQCIKRSSVRMESSNFSSGVRT) constitute a mitochondrion transit peptide. 66-74 (GLDRSGKST) is a binding site for ATP.

The protein belongs to the thymidylate kinase family. As to expression, expressed in root, rosette leaves, flower buds, flowers and siliques.

Its subcellular location is the mitochondrion. The protein resides in the cytoplasm. It localises to the nucleus. It is found in the nucleoplasm. It carries out the reaction dTMP + ATP = dTDP + ADP. Its pathway is pyrimidine metabolism; dTTP biosynthesis. Its function is as follows. Catalyzes the conversion of dTMP to dTDP. Involved in the regulation of DNA replication. Is essential to promote the first division of the zygote. The protein is Thymidylate kinase of Arabidopsis thaliana (Mouse-ear cress).